The primary structure comprises 665 residues: Protein Fe65 homolog (665 aa).

Residues 1–12 (MREGTPRVRIEV) show a composition bias toward basic and acidic residues. 2 disordered regions span residues 1–43 (MREG…DTAT) and 90–111 (SRGY…RRRN). Over residues 14–24 (KGSNRPSQFVS) the composition is skewed to polar residues. Basic and acidic residues-rich tracts occupy residues 27–40 (EEQR…RDSD) and 102–111 (GRREEERRRN). Residues 233–266 (KDLPPGWEKHEDPQGYSYYWHVDSGTIQRQPPPP) form the WW domain. PID domains are found at residues 330-456 (VRFA…RDIC) and 499-615 (FLGV…VLDA).

Interacts (via PID 2 domain) with apl-1 (via cytoplasmic domain). Phosphorylated. Expressed in the pharynx (including pharyngeal muscle and nerve cells), ventral nerve cord and tail neurons.

The protein localises to the cytoplasm. It localises to the cytoskeleton. In terms of biological role, modulates pharyngeal pumping activity, at least in part by regulating expression of the acetylcholinesterase genes ace-1 and ace-2. The chain is Protein Fe65 homolog from Caenorhabditis elegans.